Reading from the N-terminus, the 248-residue chain is Granulin (248 aa).

Belongs to the polyhedrin family.

Component of the virus occlusion bodies, which are large proteinaceous structures, that protect the virus from the outside environment for extended periods until they are ingested by insect larvae. The protein is Granulin of Zygaenidae (burnets).